Consider the following 116-residue polypeptide: MARVKRGNVARKRRNKILKLAKGFRSGNSKLFRTANQRVMKALTNAYRDRRRRKRDFRRLWIARINAAARLHGVSYSRLIGALKKADIQINRKMLAQLAVLDSAGFKAIVDLALKA.

Belongs to the bacterial ribosomal protein bL20 family.

Functionally, binds directly to 23S ribosomal RNA and is necessary for the in vitro assembly process of the 50S ribosomal subunit. It is not involved in the protein synthesizing functions of that subunit. The protein is Large ribosomal subunit protein bL20 of Synechococcus elongatus (strain ATCC 33912 / PCC 7942 / FACHB-805) (Anacystis nidulans R2).